We begin with the raw amino-acid sequence, 493 residues long: MEVHWVCMSAATLLVCYIFGSKFVRNLNGWYYDVKLRRKEHPLPPGDMGWPLIGDLLSFIKDFSSGHPDSFINNLVLKYGRSGIYKTHLFGNPSIIVCEPQMCRRVLTDDVNFKLGYPKSIKELARCRPMIDVSNAEHRLFRRLITSPIVGHKALAMYLERLEEIVINSLEELSSMKHPVELLKEMKKVSFKAIVHVFMGSSNQDIIKKIGSSFTDLYNGMFSIPINVPGFTFHKALEARKKLAKIVQPVVDERRLMIENGPQEGSQRKDLIDILLEVKDENGRKLEDEDISDLLIGLLFAGHESTATSLMWSITYLTQHPHILKKAKEEQEEITRTRFSSQKQLSLKEIKQMVYLSQVIDETLRCANIAFATFREATADVNINGYIIPKGWRVLIWARAIHMDSEYYPNPEEFNPSRWDDYNAKAGTFLPFGAGSRLCPGADLAKLEISIFLHYFLRNYRLERINPECHVTSLPVSKPTDNCLAKVIKVSCA.

The chain crosses the membrane as a helical span at residues 7-23; sequence CMSAATLLVCYIFGSKF. Position 439 (C439) interacts with heme.

Belongs to the cytochrome P450 family. Requires heme as cofactor. Expressed in roots and stolons. Not detected in leaves and stems.

The protein localises to the membrane. The enzyme catalyses beta-amyrin + 2 reduced [NADPH--hemoprotein reductase] + 2 O2 = 11-oxo-beta-amyrin + 2 oxidized [NADPH--hemoprotein reductase] + 3 H2O + 2 H(+). It catalyses the reaction beta-amyrin + reduced [NADPH--hemoprotein reductase] + O2 = 11alpha-hydroxy-beta-amyrin + oxidized [NADPH--hemoprotein reductase] + H2O + H(+). The catalysed reaction is 11alpha-hydroxy-beta-amyrin + reduced [NADPH--hemoprotein reductase] + O2 = 11-oxo-beta-amyrin + oxidized [NADPH--hemoprotein reductase] + 2 H2O + H(+). In terms of biological role, involved in the biosynthesis of Glycyrrhetinic acid (GA), a natural product which exhibits anti-inflammatory activity. Catalyzes 2 successive oxidations of beta-amyrin, producing a precursor of the triterpene sweetener glycyrrhizin. Unable to use 11-deoxoglycyrrhetinic acid or ent-kaurenoic acid as substrates. This Glycyrrhiza uralensis (Chinese licorice) protein is Beta-amyrin 11-oxidase.